The following is a 229-amino-acid chain: Sugar fermentation stimulation protein homolog (229 aa).

This sequence belongs to the SfsA family.

In Caldanaerobacter subterraneus subsp. tengcongensis (strain DSM 15242 / JCM 11007 / NBRC 100824 / MB4) (Thermoanaerobacter tengcongensis), this protein is Sugar fermentation stimulation protein homolog.